The chain runs to 185 residues: Sarcoplasmic calcium-binding proteins I, III, and IV (185 aa).

EF-hand domains follow at residues 5 to 41, 57 to 92, 102 to 137, and 138 to 173; these read FQKQ…YKEV, SLED…TIAT, WCQN…FQLQ, and CADV…TSPA. Ca(2+) contacts are provided by D19, N21, D23, S25, D30, D70, N72, D74, E81, D115, S117, D119, and E126.

Functionally, like parvalbumins, SCPs seem to be more abundant in fast contracting muscles, but no functional relationship can be established from this distribution. This is Sarcoplasmic calcium-binding proteins I, III, and IV from Branchiostoma lanceolatum (Common lancelet).